Reading from the N-terminus, the 199-residue chain is DnaJ homolog subfamily C member 5B (199 aa).

S14 carries the phosphoserine modification. The region spanning 19 to 84 (ALYEILGLHK…SKRSIYDKYG (66 aa)) is the J domain.

In terms of assembly, interacts with the chaperone complex consisting of HSC70 and SGTA. In terms of processing, palmitoylated. Palmitoylation is not required for membrane association. In terms of tissue distribution, testis specific.

The protein localises to the membrane. In Homo sapiens (Human), this protein is DnaJ homolog subfamily C member 5B (DNAJC5B).